Here is a 673-residue protein sequence, read N- to C-terminus: Probable lysophospholipase 4 (673 aa).

A signal peptide spans 1–19 (MYVNYIGLFAFVQISLTLA). N-linked (GlcNAc...) asparagine glycans are attached at residues Asn-72, Asn-125, Asn-191, Asn-194, Asn-272, Asn-301, Asn-374, Asn-404, Asn-409, Asn-481, Asn-516, Asn-545, and Asn-574. Residues 74–615 (TCSNDNLLRP…QEYCWDGTLA (542 aa)) form the PLA2c domain. A disordered region spans residues 631–653 (TTSRAPSGTTSGTASSTTSSSVA).

It belongs to the lysophospholipase family.

The protein localises to the secreted. The catalysed reaction is a 1-acyl-sn-glycero-3-phosphocholine + H2O = sn-glycerol 3-phosphocholine + a fatty acid + H(+). In terms of biological role, catalyzes the release of fatty acids from lysophospholipids. This Schizosaccharomyces pombe (strain 972 / ATCC 24843) (Fission yeast) protein is Probable lysophospholipase 4 (plb4).